A 490-amino-acid chain; its full sequence is Katanin p60 ATPase-containing subunit A-like 1 (490 aa).

Met-1 carries the post-translational modification N-acetylmethionine. The tract at residues 95 to 184 (DPAVWPPPVP…DGEMPKFDGA (90 aa)) is disordered. Over residues 116 to 127 (PNREVRPLRKEM) the composition is skewed to basic and acidic residues. The segment covering 128–139 (AGVGARGPVGRA) has biased composition (low complexity). The span at 143–169 (SKSEKPSTSRDKDCRARGRDDKGRKNM) shows a compositional bias: basic and acidic residues. Phosphoserine is present on Ser-174. Residue 248–255 (GPPGTGKT) participates in ATP binding.

It belongs to the AAA ATPase family. Katanin p60 subunit A1 subfamily. A-like 1 sub-subfamily. Interacts with KATNB1 and KATNBL1.

Its subcellular location is the cytoplasm. It localises to the cytoskeleton. The protein resides in the spindle pole. The protein localises to the spindle. It catalyses the reaction n ATP + n H2O + a microtubule = n ADP + n phosphate + (n+1) alpha/beta tubulin heterodimers.. In terms of biological role, regulates microtubule dynamics in Sertoli cells, a process that is essential for spermiogenesis and male fertility. Severs microtubules in an ATP-dependent manner, promoting rapid reorganization of cellular microtubule arrays. Has microtubule-severing activity in vitro. This is Katanin p60 ATPase-containing subunit A-like 1 from Papio anubis (Olive baboon).